A 365-amino-acid polypeptide reads, in one-letter code: Zinc finger TRAF-type-containing protein 1-A (365 aa).

The segment at 1 to 56 (MSEEREAPGPLASSSAGLGAEVGQEEVPGGAGPARLLLLPSDSDGPPKKRLRSEAE) is disordered. The segment at 72–117 (CTVCLDLPKASVYQCTNGHLMCAGCFIHLLADSRLKEEQATCPNCR) adopts an RING-type; degenerate zinc-finger fold. The TRAF-type zinc-finger motif lies at 113 to 186 (CPNCRCEISK…PWEGPYHELT (74 aa)).

Belongs to the ZFTRAF1 family.

The protein localises to the cytoplasm. The protein is Zinc finger TRAF-type-containing protein 1-A of Xenopus laevis (African clawed frog).